The primary structure comprises 641 residues: Phosphomethylpyrimidine synthase (641 aa).

Positions 1–12 are enriched in polar residues; sequence MTDTSTQNTATP. The disordered stretch occupies residues 1–25; it reads MTDTSTQNTATPTDEYGAEIHPKHS. Residues Asn200, Met229, Tyr258, His294, 314 to 316, 355 to 358, and Glu394 contribute to the substrate site; these read SRG and DGLR. His398 serves as a coordination point for Zn(2+). Residue Tyr421 coordinates substrate. Residue His462 coordinates Zn(2+). [4Fe-4S] cluster contacts are provided by Cys542, Cys545, and Cys550.

This sequence belongs to the ThiC family. Requires [4Fe-4S] cluster as cofactor.

It catalyses the reaction 5-amino-1-(5-phospho-beta-D-ribosyl)imidazole + S-adenosyl-L-methionine = 4-amino-2-methyl-5-(phosphooxymethyl)pyrimidine + CO + 5'-deoxyadenosine + formate + L-methionine + 3 H(+). The protein operates within cofactor biosynthesis; thiamine diphosphate biosynthesis. Catalyzes the synthesis of the hydroxymethylpyrimidine phosphate (HMP-P) moiety of thiamine from aminoimidazole ribotide (AIR) in a radical S-adenosyl-L-methionine (SAM)-dependent reaction. This is Phosphomethylpyrimidine synthase from Corynebacterium jeikeium (strain K411).